Reading from the N-terminus, the 289-residue chain is 4-diphosphocytidyl-2-C-methyl-D-erythritol kinase (289 aa).

Lysine 10 is a catalytic residue. Proline 94–serine 104 provides a ligand contact to ATP. The active site involves aspartate 136.

This sequence belongs to the GHMP kinase family. IspE subfamily.

It carries out the reaction 4-CDP-2-C-methyl-D-erythritol + ATP = 4-CDP-2-C-methyl-D-erythritol 2-phosphate + ADP + H(+). It participates in isoprenoid biosynthesis; isopentenyl diphosphate biosynthesis via DXP pathway; isopentenyl diphosphate from 1-deoxy-D-xylulose 5-phosphate: step 3/6. In terms of biological role, catalyzes the phosphorylation of the position 2 hydroxy group of 4-diphosphocytidyl-2C-methyl-D-erythritol. In Bacillus licheniformis (strain ATCC 14580 / DSM 13 / JCM 2505 / CCUG 7422 / NBRC 12200 / NCIMB 9375 / NCTC 10341 / NRRL NRS-1264 / Gibson 46), this protein is 4-diphosphocytidyl-2-C-methyl-D-erythritol kinase.